Here is a 422-residue protein sequence, read N- to C-terminus: Metallocarboxypeptidase A-like protein TRV_02598 (422 aa).

An N-terminal signal peptide occupies residues 1 to 16 (MQSLLLLATLLGSALG). The propeptide at 17–119 (GAIPSQSANY…ELLTLDGGAN (103 aa)) is activation peptide. The 297-residue stretch at 125-421 (SYHKYEDHLK…AGVKAMFSKL (297 aa)) folds into the Peptidase M14 domain. Positions 185 and 188 each coordinate Zn(2+). Residues 185–188 (HARE), R240, and 256–257 (NR) each bind substrate. C250 and C273 are disulfide-bonded. H311 is a binding site for Zn(2+). Position 312-313 (312-313 (SY)) interacts with substrate. The active-site Proton donor/acceptor is E387.

The protein belongs to the peptidase M14 family. The cofactor is Zn(2+).

It is found in the secreted. Functionally, extracellular metalloprotease that contributes to pathogenicity. This Trichophyton verrucosum (strain HKI 0517) protein is Metallocarboxypeptidase A-like protein TRV_02598.